Here is a 409-residue protein sequence, read N- to C-terminus: MDKLLDRFFNYVSFDTQSKANVKHVPSTDGQMKLARALQQEMIELGFERVSLSEHGCVMGTLPGNVAWSVPAIGFISHLDTSPDFTGKHVNPQIVESYRGGDIALGIGDEVLSPVMFPILHQMLGQTLITTDGKTLLGADDKAGIAEILTAMVRLQQRNIPHGDIRVAFTPDEEVGKGARFFDVAQFNAEWAYTVDGGGVGELECENFNAASVTVKIVGNNVHPGSAKGVMVNALSLATRIQQALPADETPETTADYQGFYHLSSLKGSVERAEMHYILRDFEREGFEARKRRMFEVAKQVGKGLPRDCYIEVTIEDSYYNMREQVAEHPHVIALAQQAMRDCDIEPVMKPIRGGTDGAQLSFRGLPCPNLFTGGYNYHCKHEFVSLEGMEQAVAVIMRIAALTAERAK.

His78 is a Zn(2+) binding site. Residue Asp80 is part of the active site. Asp140 lines the Zn(2+) pocket. The Proton acceptor role is filled by Glu173. Zn(2+)-binding residues include Glu174, Asp196, and His379.

This sequence belongs to the peptidase M20B family. It depends on Zn(2+) as a cofactor.

The protein localises to the cytoplasm. The catalysed reaction is Release of the N-terminal residue from a tripeptide.. Cleaves the N-terminal amino acid of tripeptides. The sequence is that of Peptidase T from Serratia proteamaculans (strain 568).